Here is a 3598-residue protein sequence, read N- to C-terminus: Dystrophin, isoforms A/C/F/G/H (3598 aa).

Residues 1 to 230 are actin-binding; that stretch reads MEPGILIDER…YVMCLYHAME (230 aa). Calponin-homology (CH) domains lie at 12–116 and 127–230; these read HIQK…LEFN and NGVE…HAME. The segment at 233–297 is disordered; the sequence is RTRQQEQEQD…SGELKTHSMR (65 aa). Residues 267-286 show a composition bias toward polar residues; that stretch reads NDQTSLGLYTSDSAGSMEQR. Spectrin repeat units follow at residues 307-420, 423-525, 851-963, 1056-1170, 1173-1275, and 1381-1483; these read VEIS…KILM, AEFQ…KLQQ, QDFG…AIEN, SHID…LLEH, TQLG…LLEQ, and SYES…TLER. 5 disordered regions span residues 1633–1696, 1716–1742, 1799–1854, 1878–1941, and 2204–2233; these read ARNT…VMPD, SLNP…SSPA, EDSD…ENTS, RDIL…EPLV, and GPRI…NEPS. Residues 1663–1679 show a composition bias toward low complexity; sequence SGESPSSAHTSSSESPT. The segment covering 1803–1816 has biased composition (basic and acidic residues); that stretch reads SSVRVDSQGKEMRR. Phosphoserine is present on residues S1832 and S1838. Over residues 1834–1843 the composition is skewed to acidic residues; sequence NDEDSAEQEE. Positions 1878 to 1893 are enriched in basic and acidic residues; that stretch reads RDILRDSEEEEPKTPD. A compositionally biased stretch (polar residues) spans 2218–2233; the sequence is SAATMSCRSEYNNEPS. Spectrin repeat units lie at residues 2237 to 2363, 2366 to 2472, 2475 to 2576, 2579 to 2712, and 2715 to 2819; these read ALAG…QLKN, SDSQ…QLHA, HSLQ…RLES, EHWN…RLDE, and TKMR…VLCQ. The interval 2655 to 2679 is disordered; it reads VSDTSDTEANHDSDSRYMSAEEQSR. Residues 2822–2852 form a disordered region; the sequence is AQQTHENGDDGRTTSNSGTIGPLPNLGQSVK. One can recognise a WW domain in the interval 2849–2882; that stretch reads QSVKPPWERATTAANVPYYIDHERETTHWDHPEM. Residues 3107–3163 form a ZZ-type zinc finger; the sequence is KHQAKCNICKEYPIVGFRYRCLKCFNFDMCQKCFFFGRNAKNHKLTHPMHEYCTTTT. 8 residues coordinate Zn(2+): C3112, C3115, C3127, C3130, C3136, C3139, H3149, and H3153. S3207 is subject to Phosphoserine. Disordered regions lie at residues 3316 to 3344, 3387 to 3449, 3483 to 3545, and 3560 to 3598; these read EQSG…GEQG, DEPN…KGIM, LHQQ…QQHL, and ELES…ELQK. Composition is skewed to polar residues over residues 3325–3337 and 3408–3439; these read NGMQ…MTGL and ALNS…QQNG. The span at 3485–3499 shows a compositional bias: low complexity; sequence QQQQQQLQQQPPQQQ. Positions 3505–3523 are enriched in gly residues; sequence GNGGMDISGGMQTSGGYLG. Residues 3534 to 3545 are compositionally biased toward low complexity; it reads SSLMQQQHQQHL. The span at 3560 to 3570 shows a compositional bias: acidic residues; that stretch reads ELESINDDLED. Over residues 3571-3589 the composition is skewed to low complexity; sequence SSSSNTTNTTTTTTTTATT.

Component of the dystrophin associated protein complex (DAPC). Interacts with Dg, via the Dg WW domain binding sites. As to expression, isoform A, isoform F and isoform G are expressed in the midgut endoderm of stage 12 embryos. In stage 16 embryos, expression is also seen in the pericardial cells, cells at the ectoderm segmental border and cells along the midline of the CNS. During embryogenesis, isoform A is also expressed in the visceral mesoderm, muscle attachment sites, mesectodermal cells at the midline, the gut, and throughout muscle fibers. In larvae, isoform A is found in all muscle fibers, but not detectable in the brain or neuropil.

The protein resides in the cell membrane. It localises to the sarcolemma. The protein localises to the cytoplasm. Its subcellular location is the cytoskeleton. Functionally, required for the maintenance of appropriate synaptic retrograde communication and the stabilization of muscle cell architecture or physiology. Both det and Dg are required for maintenance of early dpp signaling in the presumptive crossvein. Isoform A is not required to maintain muscle integrity, but plays a role in neuromuscular homeostasis by regulating neurotransmitter release. May play a role in anchoring the cytoskeleton to the plasma membrane. The protein is Dystrophin, isoforms A/C/F/G/H (Dys) of Drosophila melanogaster (Fruit fly).